The following is a 387-amino-acid chain: Killer cell lectin-like receptor subfamily G member 2 (387 aa).

The interval 1 to 105 (MEPPQVPAEA…SGEPAPASWA (105 aa)) is disordered. The span at 15-27 (ASEDSPRPERTGW) shows a compositional bias: basic and acidic residues. The residue at position 143 (serine 143) is a Phosphoserine. Residues 155 to 174 (QWLPRAPSPGSTWSRGSPLA) form a disordered region. Residues 241-261 (WALVVMAVLLAVCTVAVVALA) form a helical membrane-spanning segment. The C-type lectin domain maps to 278–383 (SQEQCYYLSE…CSSPRPWVCA (106 aa)). Disulfide bonds link cysteine 299–cysteine 382 and cysteine 361–cysteine 374.

The protein localises to the membrane. This is Killer cell lectin-like receptor subfamily G member 2 (Klrg2) from Mus musculus (Mouse).